The following is a 915-amino-acid chain: MEIPKTGVETLYPEFVVEVGRVTFGEENRKKMTNSCLKRTENLNIIKATCALLNSGGGVIKAEIHDKNYNYQCHGLGHDLETSFQKLLPFGSQKYLDYMQQGHELLIFVKSWNPDVSSLLPLRICSLRSNLYQRDVTSAINLSASSALELLREKQHAAQRGRRRLHPPRASNSNLQEEEDMKMLASEVFKKDRLMYKEKLNFTESTHVEFKRFTTKKVVPRIKEMLPHYVSAFANTQGGYLIIGVDDKSKEVFGCKKEKVNPDLLKKEIENCIEKLPTFHFCHEKPKINFITKILNVYQKDVLYGYVCVVQVEPFCCAVFAEAPDSWVMRDNAATRLTAEDWVLMMLDIPSAPCNLVTDSNAHLKSPASSAFRSPVCPTKVLEFKGALQRHLFPVTQKTIQFKPESFCKKLFSDHKGLEDLMKTQTYPYSQGIVVFSRSWAGDVGLRKEDRVLCDALLIALHSPLVLYTVLIDPSWAGGREYAWNVALHLKRKLQSVGGYPGKVGIIPRLIQLAGTWCGPGDGSVHYPQSYQLATEDDMEDLLQALVVVSLCSRSLLSDQLGCEFFNLLIAEQCEVLSQSLQETRELFIHCFPGTRKTALAIKTLEKIRDLFRCRPKEILYVCESDFLRDFVIHQTACLAVTRKTFMQGEFPKIKHIVMDETENFCSKYGDWYSKARSITHPRVRGAGNEDLHHGILWIFLDPFQVRHSDVNGLPPPPAQFPRKTITNGIHCAQEIAKVMKGAMKRITENPPSNMSPHTLALFREAACGEALGAHALPGVCETKADLTVEQIANYVAERCHGLFQCGYLPKDVAILCRREEDRARYKLALLRAMELTETHSATEVVFSQAAGVQGEHIILDSVHQFSGLHRNIVFGLSPEQRLSEEFHQLCFASKAIKHLYLLYERGQVSENYYK.

Basic residues predominate over residues 157–167 (AAQRGRRRLHP). The segment at 157 to 176 (AAQRGRRRLHPPRASNSNLQ) is disordered. A required for endoribonuclease activity region spans residues 204–389 (ESTHVEFKRF…KVLEFKGALQ (186 aa)). Residues 390 to 569 (RHLFPVTQKT…QLGCEFFNLL (180 aa)) form a required for ribosome binding region.

Associates with ribosomes in an ATP-independent manner. Mg(2+) serves as cofactor. The cofactor is Mn(2+). In terms of tissue distribution, detected in reticulocytes (at protein level).

It localises to the nucleus. Its function is as follows. Shows no ribosome-associated and endoribonuclease activities. Displays polysome-associated endoribonuclease activity towards mRNAs and rRNAs. May play a role in RNA surveillance pathways by recognizing stalled ribosomes and triggering endonucleolytic cleavage of aberrant mRNAs. Cleaves RNAs in a magnesium-, manganese-dependent and ATP-independent manner. Involved in correct maturation of megakaryocytes and especially important for proplatelet extension. In Oryctolagus cuniculus (Rabbit), this protein is Protein SLFN14.